A 157-amino-acid polypeptide reads, in one-letter code: Large ribosomal subunit protein eL24 (157 aa).

Residues 94–157 (RNQKPEVRKA…ISAPRVGGKR (64 aa)) are disordered. Positions 96-117 (QKPEVRKAQREQAIRAAKEAKK) are enriched in basic and acidic residues. The segment covering 123–140 (KKPAAPSAKASTKTAQKP) has biased composition (low complexity).

This sequence belongs to the eukaryotic ribosomal protein eL24 family. As to quaternary structure, component of the large ribosomal subunit.

Its subcellular location is the cytoplasm. Functionally, component of the large ribosomal subunit. The ribosome is a large ribonucleoprotein complex responsible for the synthesis of proteins in the cell. This is Large ribosomal subunit protein eL24 (rpl24) from Pagrus major (Red sea bream).